A 1458-amino-acid polypeptide reads, in one-letter code: MSDSGSFAASRSRREKTEKSGRKEALERLKRAKAGEKVKYEVEQVSSIYEEVDEAEYSKLVRDRQDDDWIVDDDGTGYVEDGREIFDDDLEDNALADSGKGAKGAPKDKTNVKKSSVSKPNNIKSMFMASAVKKTTDKAVDLSKDDLLGDLLQDLKSQAVPITPPPVITLKKKKLAGSPLNPFSVPPTAPKVLPTSVKRLPAVTKPGHPAAQSKASVPRQIKKEPKAELISSAVGPLKVEAQVKEEDSGMVEFDDGDFDEPMEEDVEITPVDSSTIKTQAQSIKCVKEENIKEEKSSFITSATLNESCWDQIDEAEPMTTEIQVDSSHLPLVTGADGSQVFRFYWLDAYEDQYSQPGVVYLFGKVWIESADAYVSCCVSVKNIERTVYLLPRENRVQLSTGKDTGAPVSMMHVYQEFNEAVAEKYKIMKFKSKKVDKDYAFEIPDVPASSEYLEVRYSADSPQLPQDLKGETFSHVFGTNTSSLELFLLSRKIKGPSWLEIKSPQLSSQPMSWCKVEAVVTRPDQVSVVKDLAPPPVVVLSLSMKTVQNAKTHQNEIVAIAALVHHTFPLDKAPPQPPFQTHFCVLSKLNDCIFPYDYNEAVKQKNANIEIALTERTLLGFFLAKIHKIDPDVIVGHDIYGFDLEVLLQRINSCKVPFWSKIGRLRRSVMPKLGGRSGFAERNAACGRIICDIEISAKELIRCKSYHLSELVHQILKAERVVIPPENIRNAYNDSVHLLYMLENTWIDAKFILQIMCELNVLPLALQITNIAGNVMSRTLMGGRSERNEYLLLHAFTENNFIVPDKPVFKKMQQTTVEDNDDMGTDQNKNKSRKKAAYAGGLVLEPKVGFYDKFILLLDFNSLYPSIIQEYNICFTTVHREAPSTQKGEDQDEIPELPHSDLEMGILPREIRKLVERRRHVKQLMKQPDLNPDLYLQYDIRQKALKLTANSMYGCLGFSYSRFYAKPLAALVTHQGREILLHTKEMVQKMNLEVIYGDTDSIMINTNCNNLEEVFKLGNRVKSEINKSYKLLEIDIDGIFKSLLLLKKKKYAALTVEPTGDGKYVTKQELKGLDIVRRDWCELAKQAGNYVISQILSDQPRDSIVENIQKKLTEIGENVTNGTVPITQYEINKALTKDPQDYPDKKSLPHVHVALWINSQGGRKVKAGDTISYVICQDGSNLSASQRAYAQEQLQKQENLSIDTQYYLSQQVHPVVARICEPIDGIDSALIAMWLGLDPSQFRAHRHYQQDEENDALLGGPSQLTDEEKYRDCERFKFFCPKCGTENIYDNVFDGSGLQIEPGLKRCSKPECDASPLDYVIQVHNKLLLDIRRYIKKYYSGWLVCEEKTCQNRTRRLPLSFSRNGPICQACSKATLRSEYPEKALYTQLCFYRFIFDWDYALEKVVSEQERGHLKKKLFQESENQYKKLKSTVDQVLSRSGYSEVNLSKLFQTLNTIK.

2 disordered regions span residues 1–25 (MSDS…RKEA) and 89–119 (DLED…SVSK). A compositionally biased stretch (basic and acidic residues) spans 15 to 25 (EKTEKSGRKEA). 2 DNA-binding regions span residues 650–715 (RINS…VHQI) and 1241–1373 (QFRA…ACSK). 8 residues coordinate Zn(2+): C1280, C1283, C1307, C1312, C1345, C1350, C1368, and C1371. The CysA-type zinc-finger motif lies at 1280–1310 (CPKCGTENIYDNVFDGSGLQIEPGLKRCSKP). A CysB motif motif is present at residues 1345–1371 (CEEKTCQNRTRRLPLSFSRNGPICQAC).

Belongs to the DNA polymerase type-B family. In terms of assembly, the DNA polymerase alpha complex is composed of four subunits: the catalytic subunit POLA1, the regulatory subunit POLA2, and the small and the large primase subunits PRIM1 and PRIM2 respectively. Interacts with PARP1; this interaction functions as part of the control of replication fork progression. Interacts with MCM10 and WDHD1; these interactions recruit the polymerase alpha complex to the pre-replicative complex bound to DNA. Interacts with RPA1; this interaction stabilizes the replicative complex and reduces the misincorporation rate of DNA polymerase alpha by acting as a fidelity clamp.

The protein resides in the nucleus. The enzyme catalyses DNA(n) + a 2'-deoxyribonucleoside 5'-triphosphate = DNA(n+1) + diphosphate. Functionally, plays an essential role in the initiation of DNA replication. During the S phase of the cell cycle, the DNA polymerase alpha complex (composed of a catalytic subunit POLA1/p180, a regulatory subunit POLA2/p70 and two primase subunits PRIM1/p49 and PRIM2/p58) is recruited to DNA at the replicative forks via direct interactions with MCM10 and WDHD1. The primase subunit of the polymerase alpha complex initiates DNA synthesis by oligomerising short RNA primers on both leading and lagging strands. These primers are initially extended by the polymerase alpha catalytic subunit and subsequently transferred to polymerase delta and polymerase epsilon for processive synthesis on the lagging and leading strand, respectively. The reason this transfer occurs is because the polymerase alpha has limited processivity and lacks intrinsic 3' exonuclease activity for proofreading error, and therefore is not well suited for replicating long complexes. In Xenopus laevis (African clawed frog), this protein is DNA polymerase alpha catalytic subunit (pola1).